The following is a 655-amino-acid chain: RalA-binding protein 1 (655 aa).

A disordered region spans residues 1-158 (MTECFLPPTS…KKSKDLTAAD (158 aa)). The residue at position 2 (threonine 2) is an N-acetylthreonine. Residues 24-33 (LTRTPSSEEI) show a composition bias toward polar residues. Serine 29, serine 30, and serine 34 each carry phosphoserine. A Phosphothreonine modification is found at threonine 44. Phosphoserine occurs at positions 48 and 62. Over residues 52–68 (DILHEPPDVVSDDEKDH) the composition is skewed to basic and acidic residues. 69-74 (GKKKGK) contributes to the ATP binding site. A compositionally biased stretch (basic residues) spans 69–79 (GKKKGKFKKKE). Residues serine 92 and serine 93 each carry the phosphoserine modification. A compositionally biased stretch (basic residues) spans 102 to 118 (KMKRSKGIHVFKKPSFS). The nuclear localization signal stretch occupies residues 102 to 119 (KMKRSKGIHVFKKPSFSK). Basic and acidic residues predominate over residues 119-155 (KKKEKDFKIKEKPKEEKHKEEKHKEEKHKEKKSKDLT). Positions 154–219 (LTAADVVKQW…PAVFRECIDY (66 aa)) are mediates association with membranes and could form transmembrane domains. Positions 192–380 (IPLADAVERT…VVLKQVMKPL (189 aa)) constitute a Rho-GAP domain. Positions 403–499 (RRQEFLLNCL…LTEQEELLAM (97 aa)) are mediates interaction with RALA and RALB. Residue 418 to 425 (GGIKDLSK) coordinates ATP. Residues serine 461 and serine 463 each carry the phosphoserine modification. A mediates interaction with REPS1 and REPS2 region spans residues 500-655 (EQFLRRQIAS…PSRDRKETSI (156 aa)). Disordered regions lie at residues 525–551 (QSRQQHGRSETEEYSSESESESEDEEE) and 601–655 (AEQQ…ETSI). The span at 536–551 (EEYSSESESESEDEEE) shows a compositional bias: acidic residues. Residues 624-655 (GVLEPKAAKEQPKAGKEPAKPSPSRDRKETSI) are compositionally biased toward basic and acidic residues. Serine 645 bears the Phosphoserine mark.

As to quaternary structure, interacts with the GTP-bound form of RALA (via effector domain); during mitosis, recruits RALBP1 to the mitochondrion where it promotes DNM1L phosphorylation and mitochondrial fission. Interacts with DNM1L; mediates its mitotic kinase cyclin B-CDK1-mediated phosphorylation during mitosis to promote mitochondrial fission. Interacts with the mitotic kinase cyclin B-CDK1 during mitosis. Interacts with the GTP-bound form of RALB (via effector domain). Interacts with REPS1; the interaction is direct and does not affect RALA-binding nor GTPase activator activity of RALBP1. Interacts with REPS2; the interaction is direct and does not affect RALA-binding nor GTPase activator activity of RALBP1. Interacts with EPN1, NUMB and TFAP2A during interphase and mitosis. Interacts with AP2M1; as part of the AP2 complex. Interacts with CDC42. Interacts with RAC1. Tyrosine-phosphorylated upon stimulation of cells with EGF. In terms of processing, may undergo proteolytic cleavage to give peptides which reassemble to form a transporter complex. As to expression, expressed ubiquitously but at low levels. Shows a strong expression in the erythrocytes.

It localises to the cell membrane. The protein localises to the cytoplasm. Its subcellular location is the cytosol. The protein resides in the cytoskeleton. It is found in the spindle pole. It localises to the nucleus. The protein localises to the mitochondrion. It catalyses the reaction an S-substituted glutathione(in) + ATP + H2O = an S-substituted glutathione(out) + ADP + phosphate + H(+). The enzyme catalyses ATP + H2O + xenobioticSide 1 = ADP + phosphate + xenobioticSide 2.. It carries out the reaction leukotriene C4(in) + ATP + H2O = leukotriene C4(out) + ADP + phosphate + H(+). Functionally, multifunctional protein that functions as a downstream effector of RALA and RALB. As a GTPase-activating protein/GAP can inactivate CDC42 and RAC1 by stimulating their GTPase activity. As part of the Ral signaling pathway, may also regulate ligand-dependent EGF and insulin receptors-mediated endocytosis. During mitosis, may act as a scaffold protein in the phosphorylation of EPSIN/EPN1 by the mitotic kinase cyclin B-CDK1, preventing endocytosis during that phase of the cell cycle. During mitosis, also controls mitochondrial fission as an effector of RALA. Recruited to mitochondrion by RALA, acts as a scaffold to foster the mitotic kinase cyclin B-CDK1-mediated phosphorylation and activation of DNM1L. Its function is as follows. Could also function as a primary ATP-dependent active transporter for glutathione conjugates of electrophiles. May also actively catalyze the efflux of a wide range of substrates including xenobiotics like doxorubicin (DOX) contributing to cell multidrug resistance. The protein is RalA-binding protein 1 of Homo sapiens (Human).